Reading from the N-terminus, the 359-residue chain is E3 ubiquitin-protein ligase RNF146 (359 aa).

Residues 38–76 form an RING-type zinc finger; sequence CAICLQTCVHPVSLPCKHVFCYLCVKGASWLGKRCALCR. Residues lysine 86 and lysine 96 each participate in a glycyl lysine isopeptide (Lys-Gly) (interchain with G-Cter in ubiquitin) cross-link. The WWE domain maps to 93–169; that stretch reads EELKAASRGN…EHGRRRKIKR (77 aa). A glycoprotein contacts are provided by tyrosine 109, arginine 112, and tryptophan 116. Lysine 132 participates in a covalent cross-link: Glycyl lysine isopeptide (Lys-Gly) (interchain with G-Cter in ubiquitin). Positions 146, 155, 165, and 177 each coordinate a glycoprotein. Lysine 177 is covalently cross-linked (Glycyl lysine isopeptide (Lys-Gly) (interchain with G-Cter in ubiquitin)). 2 disordered regions span residues 197 to 243 and 261 to 359; these read SSAD…DAGI and ERSH…VTEV. Residues 199-212 are compositionally biased toward low complexity; it reads ADGADSGSAQTGAS. Residues 217–235 are compositionally biased toward polar residues; it reads VPSSTRPLTSVDGQLTSPV. Acidic residues predominate over residues 284–298; the sequence is SVEETESDASSDSED. Phosphoserine occurs at positions 290 and 294. The span at 306-324 shows a compositional bias: polar residues; that stretch reads HSLTQQRPLVPNGNQTVAD.

Can form homooligomers. Interacts with PARsylated AXIN1, AXIN2, BLZF1, CASC3, H1-2, IPO7, LIG3, NCL, PARP1, XRCC1, XRCC5 and XRCC6. Interacts with DDB1, DHX15, IQGAP1, LRPPRC, PARP2, PRKDC, RUVBL2, TNKS1 and TNKS2. Binding often leads to interactor ubiquitination, in the presence of the appropriate E1 and E2 enzymes, and proteasomal degradation. Ubiquitinated; autoubiquitinated. Autoubiquitination is enhanced upon PAR-binding. As to expression, expressed at relatively high levels in the brain. Also present in spleen, heart, kidney, testis and liver. In the brain, expressed in the cerebellum, hippocampus, striatum, cortex, frontal cortex and, at lowest levels, in olfactory bulb (at protein level). Predominantly expressed in neurons.

The protein resides in the cytoplasm. Its subcellular location is the cytosol. It localises to the nucleus. It catalyses the reaction S-ubiquitinyl-[E2 ubiquitin-conjugating enzyme]-L-cysteine + [acceptor protein]-L-lysine = [E2 ubiquitin-conjugating enzyme]-L-cysteine + N(6)-ubiquitinyl-[acceptor protein]-L-lysine.. It functions in the pathway protein modification; protein ubiquitination. In terms of biological role, E3 ubiquitin-protein ligase that specifically binds poly-ADP-ribosylated (PARsylated) proteins and mediates their ubiquitination and subsequent degradation. May regulate many important biological processes, such as cell survival and DNA damage response. Acts as an activator of the Wnt signaling pathway by mediating the ubiquitination of PARsylated AXIN1 and AXIN2, 2 key components of the beta-catenin destruction complex. Acts in cooperation with tankyrase proteins (TNKS and TNKS2), which mediate PARsylation of target proteins AXIN1, AXIN2, BLZF1, CASC3, TNKS and TNKS2. Recognizes and binds tankyrase-dependent PARsylated proteins via its WWE domain and mediates their ubiquitination, leading to their degradation. Different ubiquitin linkage types have been observed: TNKS2 undergoes ubiquitination at 'Lys-48' and 'Lys-63', while AXIN1 is only ubiquitinated at 'Lys-48'. May regulate TNKS and TNKS2 subcellular location, preventing aggregation at a centrosomal location. Neuroprotective protein. Protects the brain against N-methyl-D-aspartate (NMDA) receptor-mediated glutamate excitotoxicity and ischemia, by interfering with PAR-induced cell death, called parthanatos. Prevents nuclear translocation of AIFM1 in a PAR-binding dependent manner. Does not affect PARP1 activation. Protects against cell death induced by DNA damaging agents, such as N-methyl-N-nitro-N-nitrosoguanidine (MNNG) and rescues cells from G1 arrest. Promotes cell survival after gamma-irradiation. Facilitates DNA repair. The polypeptide is E3 ubiquitin-protein ligase RNF146 (Rnf146) (Mus musculus (Mouse)).